The following is a 376-amino-acid chain: Chaperone protein DnaJ (376 aa).

Residues 5-70 (DYYEVLGVAK…QKRAAYDQYG (66 aa)) form the J domain. The CR-type zinc finger occupies 136–214 (GYDTQIRVPS…CHGSGKVKET (79 aa)). Residues Cys149, Cys152, Cys166, Cys169, Cys188, Cys191, Cys202, and Cys205 each contribute to the Zn(2+) site. 4 CXXCXGXG motif repeats span residues 149–156 (CGICHGSG), 166–173 (CPTCHGQG), 188–195 (CPKCHGTG), and 202–209 (CVHCHGSG).

Belongs to the DnaJ family. In terms of assembly, homodimer. Zn(2+) serves as cofactor.

Its subcellular location is the cytoplasm. Functionally, participates actively in the response to hyperosmotic and heat shock by preventing the aggregation of stress-denatured proteins and by disaggregating proteins, also in an autonomous, DnaK-independent fashion. Unfolded proteins bind initially to DnaJ; upon interaction with the DnaJ-bound protein, DnaK hydrolyzes its bound ATP, resulting in the formation of a stable complex. GrpE releases ADP from DnaK; ATP binding to DnaK triggers the release of the substrate protein, thus completing the reaction cycle. Several rounds of ATP-dependent interactions between DnaJ, DnaK and GrpE are required for fully efficient folding. Also involved, together with DnaK and GrpE, in the DNA replication of plasmids through activation of initiation proteins. The sequence is that of Chaperone protein DnaJ from Burkholderia thailandensis (strain ATCC 700388 / DSM 13276 / CCUG 48851 / CIP 106301 / E264).